The primary structure comprises 198 residues: NADH-quinone oxidoreductase subunit B 1 (198 aa).

The [4Fe-4S] cluster site is built by Cys77, Cys78, Cys142, and Cys172.

It belongs to the complex I 20 kDa subunit family. NDH-1 is composed of 14 different subunits. Subunits NuoB, C, D, E, F, and G constitute the peripheral sector of the complex. Requires [4Fe-4S] cluster as cofactor.

It localises to the cell inner membrane. The enzyme catalyses a quinone + NADH + 5 H(+)(in) = a quinol + NAD(+) + 4 H(+)(out). Its function is as follows. NDH-1 shuttles electrons from NADH, via FMN and iron-sulfur (Fe-S) centers, to quinones in the respiratory chain. The immediate electron acceptor for the enzyme in this species is believed to be ubiquinone. Couples the redox reaction to proton translocation (for every two electrons transferred, four hydrogen ions are translocated across the cytoplasmic membrane), and thus conserves the redox energy in a proton gradient. In Rhodopseudomonas palustris (strain ATCC BAA-98 / CGA009), this protein is NADH-quinone oxidoreductase subunit B 1.